A 77-amino-acid chain; its full sequence is Large ribosomal subunit protein uL24 (77 aa).

Residues 42 to 61 (KKHQKPSQTNANGGVVESEG) are disordered.

This sequence belongs to the universal ribosomal protein uL24 family. In terms of assembly, part of the 50S ribosomal subunit.

Its function is as follows. One of two assembly initiator proteins, it binds directly to the 5'-end of the 23S rRNA, where it nucleates assembly of the 50S subunit. One of the proteins that surrounds the polypeptide exit tunnel on the outside of the subunit. The protein is Large ribosomal subunit protein uL24 of Lactobacillus acidophilus (strain ATCC 700396 / NCK56 / N2 / NCFM).